The sequence spans 459 residues: Cysteine--tRNA ligase (459 aa).

Cys-28 contributes to the Zn(2+) binding site. Residues 30–40 (VTIYDLCHIGH) carry the 'HIGH' region motif. Zn(2+) is bound by residues Cys-209, His-234, and Glu-238. The short motif at 266-270 (KMSKS) is the 'KMSKS' region element. Residue Lys-269 coordinates ATP.

Belongs to the class-I aminoacyl-tRNA synthetase family. As to quaternary structure, monomer. Zn(2+) serves as cofactor.

Its subcellular location is the cytoplasm. The enzyme catalyses tRNA(Cys) + L-cysteine + ATP = L-cysteinyl-tRNA(Cys) + AMP + diphosphate. The polypeptide is Cysteine--tRNA ligase (Vibrio cholerae serotype O1 (strain ATCC 39541 / Classical Ogawa 395 / O395)).